We begin with the raw amino-acid sequence, 121 residues long: Ribulose bisphosphate carboxylase small subunit (121 aa).

This sequence belongs to the RuBisCO small chain family. As to quaternary structure, heterohexadecamer of 8 large and 8 small subunits.

Its function is as follows. RuBisCO catalyzes two reactions: the carboxylation of D-ribulose 1,5-bisphosphate, the primary event in carbon dioxide fixation, as well as the oxidative fragmentation of the pentose substrate. Both reactions occur simultaneously and in competition at the same active site. Although the small subunit is not catalytic it is essential for maximal activity. This is Ribulose bisphosphate carboxylase small subunit from Alvinoconcha hessleri symbiotic bacterium.